The sequence spans 646 residues: Sulfate transporter 3.2 (646 aa).

At 1–76 (MSSKRASQYH…GYSLEYLKSD (76 aa)) the chain is on the cytoplasmic side. A helical transmembrane segment spans residues 77-97 (VISGITIASLAIPQGISYAQL). Over 98 to 99 (AN) the chain is Extracellular. The chain crosses the membrane as a helical span at residues 100-120 (LPPILGLYSSLVPPLVYAIMG). Topologically, residues 121–124 (SSRD) are cytoplasmic. The chain crosses the membrane as a helical span at residues 125-145 (LAVGTVAVASLLTAAMLGKEV). The Extracellular portion of the chain corresponds to 146-154 (NAVVNPKLY). A helical transmembrane segment spans residues 155-175 (LHLAFTATFFAGLMQTCLGLL). A topological domain (cytoplasmic) is located at residue Arg-176. A helical membrane pass occupies residues 177 to 197 (LGFVVEILSHAAIVGFMGGAA). The Extracellular portion of the chain corresponds to 198-235 (TVVCLQQLKGLLGLHHFTHSTDIVTVLRSIFSQSHMWR). The helical transmembrane segment at 236 to 256 (WESGVLGCCFLIFLLTTKYIS) threads the bilayer. Topologically, residues 257–262 (KKRPKL) are cytoplasmic. Residues 263–283 (FWISAMSPLVSVIFGTIFLYF) traverse the membrane as a helical segment. Residues 284-315 (LHDQFHGIQFIGELKKGINPPSITHLVFTPPY) lie on the Extracellular side of the membrane. The helical transmembrane segment at 316–336 (VMLALKVGIITGVIALAEGIA) threads the bilayer. Topologically, residues 337–354 (VGRSFAMYKNYNIDGNKE) are cytoplasmic. A helical membrane pass occupies residues 355 to 375 (MIAFGMMNILGSFSSCYLTTG). Over 376–390 (PFSRSAVNYNAGCKT) the chain is Extracellular. The next 2 helical transmembrane spans lie at 391–411 (ALSN…LTPL) and 412–432 (FFYT…LGLV). At 433 to 447 (DYEAAIHLWKLDKFD) the chain is on the extracellular side. The helical transmembrane segment at 448-468 (FFVCLSAYLGVVFGTIEIGLI) threads the bilayer. Residues 469–646 (LSVGISVMRL…DSPVPEFNNV (178 aa)) lie on the Cytoplasmic side of the membrane. The 124-residue stretch at 504–627 (HYPQAITRSS…LTVAEAVAAC (124 aa)) folds into the STAS domain.

Belongs to the SLC26A/SulP transporter (TC 2.A.53) family. Expressed only in leaves.

It is found in the membrane. Functionally, h(+)/sulfate cotransporter that may play a role in the regulation of sulfate assimilation. This chain is Sulfate transporter 3.2 (SULTR3;2), found in Arabidopsis thaliana (Mouse-ear cress).